The primary structure comprises 513 residues: ATP synthase subunit alpha (513 aa).

169–176 (GDRQCGKT) provides a ligand contact to ATP.

Belongs to the ATPase alpha/beta chains family. In terms of assembly, F-type ATPases have 2 components, CF(1) - the catalytic core - and CF(0) - the membrane proton channel. CF(1) has five subunits: alpha(3), beta(3), gamma(1), delta(1), epsilon(1). CF(0) has three main subunits: a(1), b(2) and c(9-12). The alpha and beta chains form an alternating ring which encloses part of the gamma chain. CF(1) is attached to CF(0) by a central stalk formed by the gamma and epsilon chains, while a peripheral stalk is formed by the delta and b chains.

It localises to the cell inner membrane. It catalyses the reaction ATP + H2O + 4 H(+)(in) = ADP + phosphate + 5 H(+)(out). Its function is as follows. Produces ATP from ADP in the presence of a proton gradient across the membrane. The alpha chain is a regulatory subunit. In Burkholderia ambifaria (strain MC40-6), this protein is ATP synthase subunit alpha.